The following is a 421-amino-acid chain: Imidazolonepropionase (421 aa).

His80 and His82 together coordinate Fe(3+). Zn(2+)-binding residues include His80 and His82. 4-imidazolone-5-propanoate contacts are provided by Arg89, Tyr152, and His185. Tyr152 provides a ligand contact to N-formimidoyl-L-glutamate. A Fe(3+)-binding site is contributed by His249. His249 contributes to the Zn(2+) binding site. Glu252 is a 4-imidazolone-5-propanoate binding site. Fe(3+) is bound at residue Asp324. Residue Asp324 participates in Zn(2+) binding. Residues Asn326 and Gly328 each coordinate N-formimidoyl-L-glutamate. Ser329 contacts 4-imidazolone-5-propanoate.

The protein belongs to the metallo-dependent hydrolases superfamily. HutI family. The cofactor is Zn(2+). Fe(3+) is required as a cofactor.

It is found in the cytoplasm. It carries out the reaction 4-imidazolone-5-propanoate + H2O = N-formimidoyl-L-glutamate. It participates in amino-acid degradation; L-histidine degradation into L-glutamate; N-formimidoyl-L-glutamate from L-histidine: step 3/3. In terms of biological role, catalyzes the hydrolytic cleavage of the carbon-nitrogen bond in imidazolone-5-propanoate to yield N-formimidoyl-L-glutamate. It is the third step in the universal histidine degradation pathway. This Bacillus velezensis (strain DSM 23117 / BGSC 10A6 / LMG 26770 / FZB42) (Bacillus amyloliquefaciens subsp. plantarum) protein is Imidazolonepropionase.